A 237-amino-acid polypeptide reads, in one-letter code: Large ribosomal subunit protein uL1 (237 aa).

This sequence belongs to the universal ribosomal protein uL1 family. Part of the 50S ribosomal subunit.

Functionally, binds directly to 23S rRNA. The L1 stalk is quite mobile in the ribosome, and is involved in E site tRNA release. Protein L1 is also a translational repressor protein, it controls the translation of the L11 operon by binding to its mRNA. This chain is Large ribosomal subunit protein uL1, found in Solibacter usitatus (strain Ellin6076).